We begin with the raw amino-acid sequence, 470 residues long: tRNA modification GTPase MnmE (470 aa).

(6S)-5-formyl-5,6,7,8-tetrahydrofolate contacts are provided by lysine 27, glutamate 90, and arginine 129. Positions 231–391 (GVSLVLAGKP…LRDFLNQRFL (161 aa)) constitute a TrmE-type G domain. Residues 241 to 246 (NVGKSS), 260 to 266 (TPFPGTT), and 285 to 288 (DTAG) each bind GTP. Residues serine 245 and threonine 266 each coordinate Mg(2+). Lysine 470 is a (6S)-5-formyl-5,6,7,8-tetrahydrofolate binding site.

This sequence belongs to the TRAFAC class TrmE-Era-EngA-EngB-Septin-like GTPase superfamily. TrmE GTPase family. Homodimer. Heterotetramer of two MnmE and two MnmG subunits. K(+) serves as cofactor.

The protein resides in the cytoplasm. Exhibits a very high intrinsic GTPase hydrolysis rate. Involved in the addition of a carboxymethylaminomethyl (cmnm) group at the wobble position (U34) of certain tRNAs, forming tRNA-cmnm(5)s(2)U34. This Syntrophobacter fumaroxidans (strain DSM 10017 / MPOB) protein is tRNA modification GTPase MnmE.